Here is a 141-residue protein sequence, read N- to C-terminus: MTAAVKWAVSHRTIWRHLFPIQNGAISSACHKSTYSSLPDDYNCKVELALTSDGRTIVCYHPSVDVPYEHTKPIPHPDLLHNNEETHEQILRTKLEGNHKHLEQGPMIEQLSKVFFTTKHRWYPHGQYHRCRKKLNPPKDR.

A mitochondrion-targeting transit peptide spans 1–31 (MTAAVKWAVSHRTIWRHLFPIQNGAISSACH).

It belongs to the mitochondrion-specific ribosomal protein mL42 family. Component of the mitochondrial ribosome large subunit (39S) which comprises a 16S rRNA and about 50 distinct proteins. Component of the mitochondrial ribosome small subunit (28S) which comprises a 12S rRNA and about 30 distinct proteins.

Its subcellular location is the mitochondrion. The polypeptide is Large ribosomal subunit protein mL42 (Mrpl42) (Rattus norvegicus (Rat)).